Reading from the N-terminus, the 244-residue chain is Phosphoribosylaminoimidazole-succinocarboxamide synthase (244 aa).

The protein belongs to the SAICAR synthetase family.

It catalyses the reaction 5-amino-1-(5-phospho-D-ribosyl)imidazole-4-carboxylate + L-aspartate + ATP = (2S)-2-[5-amino-1-(5-phospho-beta-D-ribosyl)imidazole-4-carboxamido]succinate + ADP + phosphate + 2 H(+). Its pathway is purine metabolism; IMP biosynthesis via de novo pathway; 5-amino-1-(5-phospho-D-ribosyl)imidazole-4-carboxamide from 5-amino-1-(5-phospho-D-ribosyl)imidazole-4-carboxylate: step 1/2. The sequence is that of Phosphoribosylaminoimidazole-succinocarboxamide synthase from Prochlorococcus marinus (strain SARG / CCMP1375 / SS120).